The primary structure comprises 726 residues: Catalase-peroxidase (726 aa).

The segment at residues tryptophan 91 to tyrosine 214 is a cross-link (tryptophyl-tyrosyl-methioninium (Trp-Tyr) (with M-240)). Catalysis depends on histidine 92, which acts as the Proton acceptor. A cross-link (tryptophyl-tyrosyl-methioninium (Tyr-Met) (with W-91)) is located at residues tyrosine 214–methionine 240. Histidine 255 is a binding site for heme b. A disordered region spans residues alanine 335–serine 362.

It belongs to the peroxidase family. Peroxidase/catalase subfamily. As to quaternary structure, homodimer or homotetramer. Requires heme b as cofactor. Post-translationally, formation of the three residue Trp-Tyr-Met cross-link is important for the catalase, but not the peroxidase activity of the enzyme.

It catalyses the reaction H2O2 + AH2 = A + 2 H2O. The catalysed reaction is 2 H2O2 = O2 + 2 H2O. Bifunctional enzyme with both catalase and broad-spectrum peroxidase activity. In Cupriavidus metallidurans (strain ATCC 43123 / DSM 2839 / NBRC 102507 / CH34) (Ralstonia metallidurans), this protein is Catalase-peroxidase.